Consider the following 424-residue polypeptide: Tyrosine--tRNA ligase (424 aa).

Tyrosine 37 is an L-tyrosine binding site. The 'HIGH' region signature appears at proline 42–histidine 51. Residue lysine 144 is modified to N6-acetyllysine. The L-tyrosine site is built by tyrosine 175 and glutamine 179. Residues lysine 235 to threonine 239 carry the 'KMSKS' region motif. Residue lysine 238 participates in ATP binding. Residues alanine 357–glycine 414 form the S4 RNA-binding domain.

Belongs to the class-I aminoacyl-tRNA synthetase family. TyrS type 1 subfamily. In terms of assembly, homodimer.

It is found in the cytoplasm. It catalyses the reaction tRNA(Tyr) + L-tyrosine + ATP = L-tyrosyl-tRNA(Tyr) + AMP + diphosphate + H(+). Catalyzes the attachment of tyrosine to tRNA(Tyr) in a two-step reaction: tyrosine is first activated by ATP to form Tyr-AMP and then transferred to the acceptor end of tRNA(Tyr). The chain is Tyrosine--tRNA ligase from Shigella boydii serotype 4 (strain Sb227).